The primary structure comprises 300 residues: ATP synthase gamma chain (300 aa).

The protein belongs to the ATPase gamma chain family. In terms of assembly, F-type ATPases have 2 components, CF(1) - the catalytic core - and CF(0) - the membrane proton channel. CF(1) has five subunits: alpha(3), beta(3), gamma(1), delta(1), epsilon(1). CF(0) has three main subunits: a, b and c.

Its subcellular location is the cell membrane. Produces ATP from ADP in the presence of a proton gradient across the membrane. The gamma chain is believed to be important in regulating ATPase activity and the flow of protons through the CF(0) complex. The chain is ATP synthase gamma chain from Enterococcus hirae (strain ATCC 9790 / DSM 20160 / JCM 8729 / LMG 6399 / NBRC 3181 / NCIMB 6459 / NCDO 1258 / NCTC 12367 / WDCM 00089 / R).